The chain runs to 270 residues: Ethanolamine ammonia-lyase small subunit (270 aa).

Positions 161, 182, and 211 each coordinate adenosylcob(III)alamin.

This sequence belongs to the EutC family. As to quaternary structure, the basic unit is a heterodimer which dimerizes to form tetramers. The heterotetramers trimerize; 6 large subunits form a core ring with 6 small subunits projecting outwards. Requires adenosylcob(III)alamin as cofactor.

It localises to the bacterial microcompartment. It catalyses the reaction ethanolamine = acetaldehyde + NH4(+). The protein operates within amine and polyamine degradation; ethanolamine degradation. Functionally, catalyzes the deamination of various vicinal amino-alcohols to oxo compounds. Allows this organism to utilize ethanolamine as the sole source of nitrogen and carbon in the presence of external vitamin B12. The protein is Ethanolamine ammonia-lyase small subunit of Azotobacter vinelandii (strain DJ / ATCC BAA-1303).